Here is a 141-residue protein sequence, read N- to C-terminus: Ribonuclease VapC38 (141 aa).

Positions 5 and 102 each coordinate Mg(2+).

Belongs to the PINc/VapC protein family. It depends on Mg(2+) as a cofactor.

It is found in the secreted. In terms of biological role, toxic component of a type II toxin-antitoxin (TA) system. An RNase. Its cognate antitoxin is VapB38. The sequence is that of Ribonuclease VapC38 from Mycobacterium tuberculosis (strain ATCC 25618 / H37Rv).